We begin with the raw amino-acid sequence, 190 residues long: Coat protein (190 aa).

Belongs to the potexvirus capsid protein family.

The protein resides in the virion. In terms of biological role, required for genome encapsidation. Forms ribonucleoprotein complexes along with TGB1 helicase and viral RNA. In White clover mosaic virus (strain M) (WCMV), this protein is Coat protein.